Reading from the N-terminus, the 334-residue chain is Anthranilate phosphoribosyltransferase (334 aa).

5-phospho-alpha-D-ribose 1-diphosphate contacts are provided by residues G79, 82 to 83, S87, 89 to 92, 107 to 115, and S119; these read GD, NIST, and KAGNRSISS. Anthranilate is bound at residue G79. Residue S91 coordinates Mg(2+). N110 contributes to the anthranilate binding site. Position 165 (R165) interacts with anthranilate. The Mg(2+) site is built by D224 and E225.

The protein belongs to the anthranilate phosphoribosyltransferase family. Homodimer. Requires Mg(2+) as cofactor.

It carries out the reaction N-(5-phospho-beta-D-ribosyl)anthranilate + diphosphate = 5-phospho-alpha-D-ribose 1-diphosphate + anthranilate. It functions in the pathway amino-acid biosynthesis; L-tryptophan biosynthesis; L-tryptophan from chorismate: step 2/5. Catalyzes the transfer of the phosphoribosyl group of 5-phosphorylribose-1-pyrophosphate (PRPP) to anthranilate to yield N-(5'-phosphoribosyl)-anthranilate (PRA). In Streptococcus thermophilus (strain ATCC BAA-250 / LMG 18311), this protein is Anthranilate phosphoribosyltransferase.